We begin with the raw amino-acid sequence, 251 residues long: 2-C-methyl-D-erythritol 4-phosphate cytidylyltransferase (251 aa).

This sequence belongs to the IspD/TarI cytidylyltransferase family. IspD subfamily.

The catalysed reaction is 2-C-methyl-D-erythritol 4-phosphate + CTP + H(+) = 4-CDP-2-C-methyl-D-erythritol + diphosphate. It functions in the pathway isoprenoid biosynthesis; isopentenyl diphosphate biosynthesis via DXP pathway; isopentenyl diphosphate from 1-deoxy-D-xylulose 5-phosphate: step 2/6. Functionally, catalyzes the formation of 4-diphosphocytidyl-2-C-methyl-D-erythritol from CTP and 2-C-methyl-D-erythritol 4-phosphate (MEP). In Cupriavidus pinatubonensis (strain JMP 134 / LMG 1197) (Cupriavidus necator (strain JMP 134)), this protein is 2-C-methyl-D-erythritol 4-phosphate cytidylyltransferase.